A 348-amino-acid chain; its full sequence is Photosystem II protein D1 (348 aa).

The next 3 membrane-spanning stretches (helical) occupy residues 33–50 (YIGW…LATV), 122–137 (HFIL…EWEF), and 146–160 (WIFV…AASA). Histidine 122 is a chlorophyll a binding site. Tyrosine 130 serves as a coordination point for pheophytin a. Residues aspartate 174 and glutamate 193 each coordinate [CaMn4O5] cluster. Residues 201-222 (FHILGVAAVFGGSLFSAMHGSL) traverse the membrane as a helical segment. Histidine 202 contributes to the chlorophyll a binding site. Residues histidine 219 and 268-269 (SF) contribute to the a quinone site. Position 219 (histidine 219) interacts with Fe cation. Histidine 276 provides a ligand contact to Fe cation. Residues 278–292 (FLAAWPVIGIWFTAL) form a helical membrane-spanning segment. Histidine 336, glutamate 337, aspartate 346, and alanine 348 together coordinate [CaMn4O5] cluster.

It belongs to the reaction center PufL/M/PsbA/D family. PSII is composed of 1 copy each of membrane proteins PsbA, PsbB, PsbC, PsbD, PsbE, PsbF, PsbH, PsbI, PsbJ, PsbK, PsbL, PsbM, PsbT, PsbX, PsbY, PsbZ, Psb30/Ycf12, at least 3 peripheral proteins of the oxygen-evolving complex and a large number of cofactors. It forms dimeric complexes. It depends on The D1/D2 heterodimer binds P680, chlorophylls that are the primary electron donor of PSII, and subsequent electron acceptors. It shares a non-heme iron and each subunit binds pheophytin, quinone, additional chlorophylls, carotenoids and lipids. D1 provides most of the ligands for the Mn4-Ca-O5 cluster of the oxygen-evolving complex (OEC). There is also a Cl(-1) ion associated with D1 and D2, which is required for oxygen evolution. The PSII complex binds additional chlorophylls, carotenoids and specific lipids. as a cofactor. In terms of processing, tyr-165 forms a radical intermediate that is referred to as redox-active TyrZ, YZ or Y-Z.

It localises to the plastid. It is found in the chloroplast thylakoid membrane. The enzyme catalyses 2 a plastoquinone + 4 hnu + 2 H2O = 2 a plastoquinol + O2. In terms of biological role, photosystem II (PSII) is a light-driven water:plastoquinone oxidoreductase that uses light energy to abstract electrons from H(2)O, generating O(2) and a proton gradient subsequently used for ATP formation. It consists of a core antenna complex that captures photons, and an electron transfer chain that converts photonic excitation into a charge separation. The D1/D2 (PsbA/PsbD) reaction center heterodimer binds P680, the primary electron donor of PSII as well as several subsequent electron acceptors. The chain is Photosystem II protein D1 from Heterocapsa pygmaea (Dinoflagellate).